Consider the following 99-residue polypeptide: UPF0751 protein BAMEG_A0107 (99 aa).

It belongs to the UPF0751 family.

The polypeptide is UPF0751 protein BAMEG_A0107 (Bacillus anthracis (strain CDC 684 / NRRL 3495)).